The sequence spans 1746 residues: tRNA (32-2'-O)-methyltransferase regulator THADA (1746 aa).

A coiled-coil region spans residues 1252-1286 (EQALAEIRRIVVELKALQLRLKNTEAANTKLNTNV).

The protein belongs to the THADA family. As to quaternary structure, interacts with SERCA. As to expression, detected in the larval fat body, salivary glands and wing imaginal disks (at protein level).

The protein resides in the endoplasmic reticulum. Together with methyltransferase Trm7-32, methylates the 2'-O-ribose of nucleotides at position 32 of the anticodon loop of substrate tRNAs. Plays a key role in energy homeostasis by regulating the balance between energy storage and heat production. Functions by negatively regulating Ca(2+) signaling pathways that are involved in heat production and maintaining correct lipid storage in the fat body. Regulates Ca(2+) signaling pathways by reducing the activity of the calcium-transporting ATPase SERCA possibly by promoting uncoupling of SERCA ATP hydrolysis from calcium pumping. May also function in the nervous system to control feeding behavior. The protein is tRNA (32-2'-O)-methyltransferase regulator THADA of Drosophila melanogaster (Fruit fly).